Consider the following 136-residue polypeptide: Large ribosomal subunit protein bL17 (136 aa).

The protein belongs to the bacterial ribosomal protein bL17 family. Part of the 50S ribosomal subunit. Contacts protein L32.

The chain is Large ribosomal subunit protein bL17 from Rickettsia peacockii (strain Rustic).